A 304-amino-acid polypeptide reads, in one-letter code: MTENTKTHVILLSCGSFNPITKGHIHMFEKAREYLHKTGRFIVIGGIVSPVHDSYGKPGLVPSRHRLTMCQLAVQSSDWIRVDPWECYQDTWQTTCSVLEHHRDLMKRVTGCILSNVNTPSTTPVIGQPQNETSAIYQNTVNKSVAIKFWGKMSESLGKICCVRPHMDRFTFVDENANLGTAMRYEEIELRILLLCGSDLLESFCIPGLWNESDMEVIVGDFGIVVVPRDGADTERIMNHSSVLRKHKDNIIVVKDEIDHPMSIVSSTKSRLALQHGDGHVVDYLSQPVIDYILQSQLYINASG.

NAD(+) is bound by residues S16 and F17. H24 serves as a coordination point for ATP. NAD(+) is bound by residues W92 and T95. Residues C161 and C162 are each lipidated (S-palmitoyl cysteine). NAD(+) is bound by residues G197, D199, L209, W210, and R229. 268–271 contacts ATP; sequence TKSR.

This sequence belongs to the eukaryotic NMN adenylyltransferase family. In terms of assembly, monomer. It depends on Mg(2+) as a cofactor.

The protein resides in the golgi apparatus membrane. Its subcellular location is the cytoplasmic vesicle membrane. It is found in the cytoplasm. It localises to the cell projection. The protein localises to the axon. It carries out the reaction beta-nicotinamide D-ribonucleotide + ATP + H(+) = diphosphate + NAD(+). The enzyme catalyses nicotinate beta-D-ribonucleotide + ATP + H(+) = deamido-NAD(+) + diphosphate. Its pathway is cofactor biosynthesis; NAD(+) biosynthesis; NAD(+) from nicotinamide D-ribonucleotide: step 1/1. It participates in cofactor biosynthesis; NAD(+) biosynthesis; deamido-NAD(+) from nicotinate D-ribonucleotide: step 1/1. Its function is as follows. Nicotinamide/nicotinate-nucleotide adenylyltransferase that acts as an axon maintenance factor. Axon survival factor required for the maintenance of healthy axons: acts by delaying Wallerian axon degeneration, an evolutionarily conserved process that drives the loss of damaged axons. Catalyzes the formation of NAD(+) from nicotinamide mononucleotide (NMN) and ATP. Can also use the deamidated form; nicotinic acid mononucleotide (NaMN) as substrate but with a lower efficiency. Also catalyzes the reverse reaction, i.e. the pyrophosphorolytic cleavage of NAD(+). For the pyrophosphorolytic activity prefers NAD(+), NADH and NaAD as substrates and degrades nicotinic acid adenine dinucleotide phosphate (NHD) less effectively. Also acts as an activator of ADP-ribosylation by supporting the catalytic activity of PARP16 and promoting mono-ADP-ribosylation of ribosomes by PARP16. May be involved in the maintenance of axonal integrity. The sequence is that of Nicotinamide/nicotinic acid mononucleotide adenylyltransferase 2 (nmnat2) from Danio rerio (Zebrafish).